A 347-amino-acid chain; its full sequence is Glutamyl-Q tRNA(Asp) synthetase (347 aa).

L-glutamate-binding positions include 31–35 (RFAPS) and Glu67. Positions 34–44 (PSPTSALHLGN) match the 'HIGH' region motif. Cys121, Cys123, Tyr143, and Cys147 together coordinate Zn(2+). The L-glutamate site is built by Tyr203 and Arg221. The 'KMSKS' region signature appears at 259 to 263 (RLSKS). Lys262 serves as a coordination point for ATP.

The protein belongs to the class-I aminoacyl-tRNA synthetase family. GluQ subfamily. Requires Zn(2+) as cofactor.

Catalyzes the tRNA-independent activation of glutamate in presence of ATP and the subsequent transfer of glutamate onto a tRNA(Asp). Glutamate is transferred on the 2-amino-5-(4,5-dihydroxy-2-cyclopenten-1-yl) moiety of the queuosine in the wobble position of the QUC anticodon. In Cutibacterium acnes (strain DSM 16379 / KPA171202) (Propionibacterium acnes), this protein is Glutamyl-Q tRNA(Asp) synthetase.